The primary structure comprises 426 residues: SrfA-induced gene K protein (426 aa).

A signal peptide spans 1-23 (MKKMKILSFFILSLAIIIGIVYS). N-linked (GlcNAc...) asparagine glycosylation is found at Asn-64, Asn-136, Asn-160, and Asn-226. Laminin EGF-like domains lie at 325–348 (DNQC…GMVL) and 384–408 (CNGT…GGEV). 3 cysteine pairs are disulfide-bonded: Cys-330–Cys-339, Cys-342–Cys-358, and Cys-370–Cys-388. N-linked (GlcNAc...) asparagine glycosylation is present at Asn-385.

The chain is SrfA-induced gene K protein (sigK) from Dictyostelium discoideum (Social amoeba).